A 1202-amino-acid polypeptide reads, in one-letter code: CHD3-type chromatin-remodeling factor CHR7 (1202 aa).

Chromo domains are found at residues 45-109 (GEIE…HPHL) and 142-201 (KTVD…RDKY). The region spanning 237 to 405 (RYSWSKKTNV…FALMHFLDAD (169 aa)) is the Helicase ATP-binding domain. 250–257 (DEMGLGKT) is a binding site for ATP. A DEAH box motif is present at residues 356-359 (DEGH). The Helicase C-terminal domain occupies 528–679 (LLDKMMVKLK…HLVVGKQHLC (152 aa)). The interval 838 to 872 (TSDEEEEADEPEAARQRKPRTVTRPYRKRARDNSE) is disordered. Residues 853–867 (QRKPRTVTRPYRKRA) are compositionally biased toward basic residues.

The protein belongs to the SNF2/RAD54 helicase family.

The protein localises to the nucleus. In terms of biological role, chromatin remodeling factor that represses the expression of embryonic trait genes upon and after seed germination and thus enables the developmental switch to post-germinative growth. The protein is CHD3-type chromatin-remodeling factor CHR7 of Arabidopsis thaliana (Mouse-ear cress).